A 348-amino-acid chain; its full sequence is MARFNAAFTRIKIMFSRIRGLISCQSNTQTIAPTLSPPSSGHVSFAGIDYPLLPLNHQTPLVFQWFERNPDRFGQNEIPIINTQKNPYLNNIINAAIIEKERIIGIFVDGDFSKGQRKALGKLEQNYRNIKVIYNSDLNYSMYDKKLTTIYLENITKLEAQSASERDEVLLNGVKKSLEDVLKNNPEETLISSHNKDKGHLWFDFYRNLFLLKGSDAFLEAGKPGCHHLQPGGGCIYLDADMLLTDKLGTLYLPDGIAIHVSRKDNHVSLENGIIAVNRSEHPALIKGLEIMHSKPYGDPYNDWLSKGLRHYFDGSHIQDYDAFCDFIEFKHENIIMNTSSLTASSWR.

UDP-N-acetyl-alpha-D-glucosamine-binding positions include 64–66, Tyr88, and 237–240; these read QWF and YLDA. The DXD motif signature appears at 239–241; it reads DAD. Asp241 contacts Mn(2+). Glu271 serves as the catalytic Proton acceptor. Residues Asn338, Ser340, and 345–348 each bind UDP-N-acetyl-alpha-D-glucosamine; that span reads SSWR. 2 residues coordinate Mn(2+): Asn338 and Ser340.

Belongs to the glycosyltransferase NleB family. Mn(2+) is required as a cofactor.

It is found in the secreted. The protein localises to the host Golgi apparatus. It catalyses the reaction L-arginyl-[protein] + UDP-N-acetyl-alpha-D-glucosamine = N(omega)-(N-acetyl-beta-D-glucosaminyl)-L-arginyl-[protein] + UDP + H(+). Protein-arginine N-acetylglucosaminyltransferase activity is inhibited by 100066N compound (flavone analog) and 102644N compound (a substituted isoxazole). Protein-arginine N-acetylglucosaminyltransferase effector that catalyzes the transfer of a single N-acetylglucosamine (GlcNAc) to a conserved arginine residue in the death domain of host proteins such as FADD: arginine GlcNAcylation prevents homotypic/heterotypic death domain interactions. Also acts on host proteins without a death domain: catalyzes arginine GlcNAcylation of host small Rab1 GTPase, thereby preventing GTPase activity and leading to impaired host vesicular protein transport. In contrast to Ssek1, not able to disrupt TNF signaling in infected cells. The chain is Protein-arginine N-acetylglucosaminyltransferase SseK2 from Salmonella typhimurium (strain SL1344).